Reading from the N-terminus, the 464-residue chain is 3-isopropylmalate dehydratase large subunit (464 aa).

Residues C337, C397, and C400 each coordinate [4Fe-4S] cluster.

This sequence belongs to the aconitase/IPM isomerase family. LeuC type 1 subfamily. Heterodimer of LeuC and LeuD. The cofactor is [4Fe-4S] cluster.

It catalyses the reaction (2R,3S)-3-isopropylmalate = (2S)-2-isopropylmalate. It participates in amino-acid biosynthesis; L-leucine biosynthesis; L-leucine from 3-methyl-2-oxobutanoate: step 2/4. In terms of biological role, catalyzes the isomerization between 2-isopropylmalate and 3-isopropylmalate, via the formation of 2-isopropylmaleate. The polypeptide is 3-isopropylmalate dehydratase large subunit (Bacillus cereus (strain G9842)).